A 116-amino-acid chain; its full sequence is Spermadhesin Z13 (116 aa).

2 cysteine pairs are disulfide-bonded: cysteine 14–cysteine 35 and cysteine 58–cysteine 79. One can recognise a CUB domain in the interval 14-115 (CGDLYGEEYG…PDFFLIFRRV (102 aa)).

This sequence belongs to the spermadhesin family. As to quaternary structure, homodimer; disulfide-linked. Seminal plasma.

The protein localises to the secreted. May be involved in the fertilization process. This is Spermadhesin Z13 from Bos taurus (Bovine).